We begin with the raw amino-acid sequence, 565 residues long: NAD-dependent malic enzyme (565 aa).

Catalysis depends on tyrosine 104, which acts as the Proton donor. Residue arginine 157 coordinates NAD(+). Lysine 175 acts as the Proton acceptor in catalysis. Glutamate 246, aspartate 247, and aspartate 270 together coordinate a divalent metal cation. 2 residues coordinate NAD(+): aspartate 270 and asparagine 418.

This sequence belongs to the malic enzymes family. As to quaternary structure, homotetramer. Mg(2+) serves as cofactor. The cofactor is Mn(2+).

The enzyme catalyses (S)-malate + NAD(+) = pyruvate + CO2 + NADH. The catalysed reaction is oxaloacetate + H(+) = pyruvate + CO2. This chain is NAD-dependent malic enzyme, found in Pectobacterium atrosepticum (strain SCRI 1043 / ATCC BAA-672) (Erwinia carotovora subsp. atroseptica).